The following is a 378-amino-acid chain: Polar flagellin B/D (378 aa).

Coiled coils occupy residues S103–E128 and A311–T340.

The protein belongs to the bacterial flagellin family. As to quaternary structure, heteromer of multiple flagellin subunits including FlaA, FlaB/D, FlaC, FlaE and FlaF.

It is found in the secreted. The protein localises to the bacterial flagellum. Functionally, flagellin is the subunit protein which polymerizes to form the filaments of bacterial flagella. FlaB/D is not essential for polar flagellar synthesis and swimming motility. Homomer of FlaB/D is not able to form a functional filament. This Vibrio parahaemolyticus serotype O3:K6 (strain RIMD 2210633) protein is Polar flagellin B/D (flaB).